The primary structure comprises 328 residues: Biotin synthase (328 aa).

In terms of domain architecture, Radical SAM core spans 42 to 267 (YHVQLASLLS…LMPGSRVRLS (226 aa)). Positions 57, 61, and 64 each coordinate [4Fe-4S] cluster. Cys-101, Cys-133, Cys-193, and Arg-265 together coordinate [2Fe-2S] cluster.

This sequence belongs to the radical SAM superfamily. Biotin synthase family. As to quaternary structure, homodimer. [4Fe-4S] cluster is required as a cofactor. The cofactor is [2Fe-2S] cluster.

The enzyme catalyses (4R,5S)-dethiobiotin + (sulfur carrier)-SH + 2 reduced [2Fe-2S]-[ferredoxin] + 2 S-adenosyl-L-methionine = (sulfur carrier)-H + biotin + 2 5'-deoxyadenosine + 2 L-methionine + 2 oxidized [2Fe-2S]-[ferredoxin]. It participates in cofactor biosynthesis; biotin biosynthesis; biotin from 7,8-diaminononanoate: step 2/2. Its function is as follows. Catalyzes the conversion of dethiobiotin (DTB) to biotin by the insertion of a sulfur atom into dethiobiotin via a radical-based mechanism. The protein is Biotin synthase of Synechococcus sp. (strain CC9311).